The following is a 92-amino-acid chain: Large ribosomal subunit protein uL23c (92 aa).

This sequence belongs to the universal ribosomal protein uL23 family. Part of the 50S ribosomal subunit.

It is found in the plastid. The protein resides in the chloroplast. In terms of biological role, binds to 23S rRNA. This is Large ribosomal subunit protein uL23c (rpl23) from Nephroselmis olivacea (Green alga).